We begin with the raw amino-acid sequence, 102 residues long: NADH-quinone oxidoreductase subunit K (102 aa).

A run of 3 helical transmembrane segments spans residues 5–25 (ITHY…GIFL), 31–51 (IIIL…FVAF), and 66–86 (FVLT…VVFF).

Belongs to the complex I subunit 4L family. NDH-1 is composed of 14 different subunits. Subunits NuoA, H, J, K, L, M, N constitute the membrane sector of the complex.

The protein localises to the cell inner membrane. It carries out the reaction a quinone + NADH + 5 H(+)(in) = a quinol + NAD(+) + 4 H(+)(out). Its function is as follows. NDH-1 shuttles electrons from NADH, via FMN and iron-sulfur (Fe-S) centers, to quinones in the respiratory chain. The immediate electron acceptor for the enzyme in this species is believed to be ubiquinone. Couples the redox reaction to proton translocation (for every two electrons transferred, four hydrogen ions are translocated across the cytoplasmic membrane), and thus conserves the redox energy in a proton gradient. This Bartonella tribocorum (strain CIP 105476 / IBS 506) protein is NADH-quinone oxidoreductase subunit K.